Here is a 286-residue protein sequence, read N- to C-terminus: Ribosomal RNA small subunit methyltransferase A (286 aa).

S-adenosyl-L-methionine-binding residues include Asn-28, Leu-30, Gly-55, Glu-77, Asp-103, and Asn-123.

It belongs to the class I-like SAM-binding methyltransferase superfamily. rRNA adenine N(6)-methyltransferase family. RsmA subfamily.

The protein localises to the cytoplasm. The catalysed reaction is adenosine(1518)/adenosine(1519) in 16S rRNA + 4 S-adenosyl-L-methionine = N(6)-dimethyladenosine(1518)/N(6)-dimethyladenosine(1519) in 16S rRNA + 4 S-adenosyl-L-homocysteine + 4 H(+). Its function is as follows. Specifically dimethylates two adjacent adenosines (A1518 and A1519) in the loop of a conserved hairpin near the 3'-end of 16S rRNA in the 30S particle. May play a critical role in biogenesis of 30S subunits. The polypeptide is Ribosomal RNA small subunit methyltransferase A (Rhodopseudomonas palustris (strain BisB18)).